A 611-amino-acid polypeptide reads, in one-letter code: Dihydroxy-acid dehydratase (611 aa).

D81 provides a ligand contact to Mg(2+). C122 lines the [2Fe-2S] cluster pocket. Mg(2+)-binding residues include D123 and K124. K124 carries the N6-carboxylysine modification. [2Fe-2S] cluster is bound at residue C195. Residue E491 participates in Mg(2+) binding. S517 (proton acceptor) is an active-site residue.

This sequence belongs to the IlvD/Edd family. Homodimer. [2Fe-2S] cluster is required as a cofactor. Mg(2+) serves as cofactor.

It carries out the reaction (2R)-2,3-dihydroxy-3-methylbutanoate = 3-methyl-2-oxobutanoate + H2O. It catalyses the reaction (2R,3R)-2,3-dihydroxy-3-methylpentanoate = (S)-3-methyl-2-oxopentanoate + H2O. It functions in the pathway amino-acid biosynthesis; L-isoleucine biosynthesis; L-isoleucine from 2-oxobutanoate: step 3/4. It participates in amino-acid biosynthesis; L-valine biosynthesis; L-valine from pyruvate: step 3/4. In terms of biological role, functions in the biosynthesis of branched-chain amino acids. Catalyzes the dehydration of (2R,3R)-2,3-dihydroxy-3-methylpentanoate (2,3-dihydroxy-3-methylvalerate) into 2-oxo-3-methylpentanoate (2-oxo-3-methylvalerate) and of (2R)-2,3-dihydroxy-3-methylbutanoate (2,3-dihydroxyisovalerate) into 2-oxo-3-methylbutanoate (2-oxoisovalerate), the penultimate precursor to L-isoleucine and L-valine, respectively. The polypeptide is Dihydroxy-acid dehydratase (Brucella suis (strain ATCC 23445 / NCTC 10510)).